Consider the following 426-residue polypeptide: Phosphomethylpyrimidine synthase (426 aa).

Residues Asn65, Met94, Tyr123, His162, 184–186 (SRG), 225–228 (DGLR), and Glu264 contribute to the substrate site. His268 provides a ligand contact to Zn(2+). Substrate is bound at residue Tyr291. His332 contributes to the Zn(2+) binding site. Residues Cys409, Cys412, and Cys416 each contribute to the [4Fe-4S] cluster site.

The protein belongs to the ThiC family. [4Fe-4S] cluster serves as cofactor.

It carries out the reaction 5-amino-1-(5-phospho-beta-D-ribosyl)imidazole + S-adenosyl-L-methionine = 4-amino-2-methyl-5-(phosphooxymethyl)pyrimidine + CO + 5'-deoxyadenosine + formate + L-methionine + 3 H(+). Its pathway is cofactor biosynthesis; thiamine diphosphate biosynthesis. Catalyzes the synthesis of the hydroxymethylpyrimidine phosphate (HMP-P) moiety of thiamine from aminoimidazole ribotide (AIR) in a radical S-adenosyl-L-methionine (SAM)-dependent reaction. This Thermodesulfovibrio yellowstonii (strain ATCC 51303 / DSM 11347 / YP87) protein is Phosphomethylpyrimidine synthase.